A 515-amino-acid polypeptide reads, in one-letter code: Na(+)/H(+) antiporter NhaB (515 aa).

The next 13 helical transmembrane spans lie at 23-43 (IIVF…FIAG), 44-64 (WCLV…YPLQ), 88-108 (IMAS…IYFM), 119-139 (LLIT…SAAF), 143-163 (FLDA…FYGV), 202-222 (LMMH…VGEP), 238-258 (FFIR…ITCV), 303-323 (GIIG…VGLI), 324-344 (GLSV…STIG), 357-377 (LVVF…GPII), 389-409 (LLLF…VFVA), 447-467 (ATPN…APLI), and 477-497 (MALP…EYIL).

It belongs to the NhaB Na(+)/H(+) (TC 2.A.34) antiporter family.

The protein localises to the cell inner membrane. The catalysed reaction is 2 Na(+)(in) + 3 H(+)(out) = 2 Na(+)(out) + 3 H(+)(in). Functionally, na(+)/H(+) antiporter that extrudes sodium in exchange for external protons. This chain is Na(+)/H(+) antiporter NhaB, found in Mannheimia succiniciproducens (strain KCTC 0769BP / MBEL55E).